A 390-amino-acid chain; its full sequence is Tuftelin (390 aa).

Coiled coils occupy residues 88-126 (DKMT…KLDR) and 163-352 (PSMS…EKQV). The disordered stretch occupies residues 356–383 (NFSTQARAKTENLGSVRISKPPSPKPMP).

It belongs to the tuftelin family. As to quaternary structure, interacts with TFIP11. May form oligomers. In terms of tissue distribution, ameloblasts, and also non-odontogenic tissues including kidney, lung, liver and testis.

It is found in the secreted. In terms of biological role, involved in the structural organization of the epidermis. Involved in the mineralization and structural organization of enamel. This Mus musculus (Mouse) protein is Tuftelin (Tuft1).